Reading from the N-terminus, the 128-residue chain is Protein 2B* (128 aa).

Disordered stretches follow at residues 1–27 (PFMF…NPTA) and 92–128 (RDDN…RNSS). Residues 18-27 (SVINGSNPTA) show a composition bias toward polar residues. Residues 111 to 128 (IDGRRDYKPDKSVRRNSS) show a composition bias toward basic and acidic residues.

The protein belongs to the encephalomyocarditis virus protein 2B* family.

In Aotus trivirgatus (Three-striped night monkey), this protein is Protein 2B*.